A 215-amino-acid polypeptide reads, in one-letter code: Probable phosphoglycerate mutase GpmB (215 aa).

Residues R8–N15, Q21–G22, R58, R60, E82–M85, R104–R105, and G151–I152 each bind substrate. Catalysis depends on H9, which acts as the Tele-phosphohistidine intermediate. The active-site Proton donor/acceptor is E82.

This sequence belongs to the phosphoglycerate mutase family. GpmB subfamily.

It carries out the reaction (2R)-2-phosphoglycerate = (2R)-3-phosphoglycerate. The protein operates within carbohydrate degradation; glycolysis; pyruvate from D-glyceraldehyde 3-phosphate: step 3/5. This chain is Probable phosphoglycerate mutase GpmB, found in Escherichia coli O9:H4 (strain HS).